The chain runs to 225 residues: Glutathione s-transferase kappa 2 (225 aa).

Residues 15-17 (SPY), Asn-52, and 200-201 (SD) contribute to the glutathione site.

The protein belongs to the GST superfamily. Kappa family. Expressed in the pharynx, body wall muscles and epidermis. Weaker expression is seen in the intestine.

The protein localises to the mitochondrion. The catalysed reaction is RX + glutathione = an S-substituted glutathione + a halide anion + H(+). Functionally, has roles in respiratory and lipid metabolism. This is Glutathione s-transferase kappa 2 (gstk-2) from Caenorhabditis elegans.